Consider the following 403-residue polypeptide: Phosphoglycerate kinase (403 aa).

Residues 22-24 (DLN), Arg-37, 60-63 (HLGN), Arg-119, and Arg-152 contribute to the substrate site. ATP contacts are provided by residues Lys-202, Glu-325, and 355 to 358 (GGDT).

This sequence belongs to the phosphoglycerate kinase family. As to quaternary structure, monomer.

The protein localises to the cytoplasm. It catalyses the reaction (2R)-3-phosphoglycerate + ATP = (2R)-3-phospho-glyceroyl phosphate + ADP. The protein operates within carbohydrate degradation; glycolysis; pyruvate from D-glyceraldehyde 3-phosphate: step 2/5. This Orientia tsutsugamushi (strain Boryong) (Rickettsia tsutsugamushi) protein is Phosphoglycerate kinase.